The chain runs to 649 residues: Threonine--tRNA ligase (649 aa).

A TGS domain is found at 1-66 (MVQITLPDGS…DNDAQLAIVT (66 aa)). The segment at 247–538 (DHRKIGRELD…LIENHAGAMP (292 aa)) is catalytic. Zn(2+) contacts are provided by C338, H389, and H515.

The protein belongs to the class-II aminoacyl-tRNA synthetase family. In terms of assembly, homodimer. Zn(2+) is required as a cofactor.

It is found in the cytoplasm. It catalyses the reaction tRNA(Thr) + L-threonine + ATP = L-threonyl-tRNA(Thr) + AMP + diphosphate + H(+). Its function is as follows. Catalyzes the attachment of threonine to tRNA(Thr) in a two-step reaction: L-threonine is first activated by ATP to form Thr-AMP and then transferred to the acceptor end of tRNA(Thr). Also edits incorrectly charged L-seryl-tRNA(Thr). This is Threonine--tRNA ligase from Bordetella bronchiseptica (strain ATCC BAA-588 / NCTC 13252 / RB50) (Alcaligenes bronchisepticus).